The sequence spans 95 residues: Osteocalcin-related protein (95 aa).

An N-terminal signal peptide occupies residues 1–23 (MRTLSLLTLLALAALCLSDLTDA). The propeptide occupies 24–49 (TPTGPESDKAFMSKQEGNKVVNRLRR). The Gla domain occupies 46–92 (RLRRYLGASVPSPDPLEPTRELCELDPACDELSNQYGLKTAYRRIYG). Residues glutamate 62, glutamate 66, glutamate 69, and aspartate 75 each contribute to the Ca(2+) site. 4-carboxyglutamate is present on residues glutamate 66 and glutamate 69. Cysteine 68 and cysteine 74 are disulfide-bonded.

The protein belongs to the osteocalcin/matrix Gla protein family. Gamma-carboxyglutamic acid residues are formed by vitamin K dependent carboxylation. These residues are essential for the binding of calcium. In terms of tissue distribution, expressed in kidney and lung, but not in bone.

The protein resides in the secreted. Its function is as follows. Binds strongly to apatite and calcium. In Mus musculus (Mouse), this protein is Osteocalcin-related protein.